Consider the following 455-residue polypeptide: Notoamide E oxidase notB' (455 aa).

A helical transmembrane segment spans residues Pro11–Leu31. 2 residues coordinate FAD: Glu48 and Gly61. The N-linked (GlcNAc...) asparagine glycan is linked to Asn75. FAD is bound at residue Arg121. Residues Arg199 and Tyr229 contribute to the active site. Asp324 and Gly337 together coordinate FAD.

This sequence belongs to the paxM FAD-dependent monooxygenase family. Requires FAD as cofactor.

It is found in the membrane. The enzyme catalyses notoamide E + NADPH + O2 + H(+) = notoamide C + NADP(+) + H2O. It carries out the reaction notoamide E + NADPH + O2 + H(+) = notoamide D + NADP(+) + H2O. It participates in alkaloid biosynthesis. FAD-dependent monooxygenase; part of the gene cluster that mediates the biosynthesis of notoamide, a fungal indole alkaloid that belongs to a family of natural products containing a characteristic bicyclo[2.2.2]diazaoctane core. The first step of notoamide biosynthesis involves coupling of L-proline and L-tryptophan by the bimodular NRPS notE', to produce cyclo-L-tryptophan-L-proline called brevianamide F. The reverse prenyltransferase notF' then acts as a deoxybrevianamide E synthase and converts brevianamide F to deoxybrevianamide E via reverse prenylation at C-2 of the indole ring leading to the bicyclo[2.2.2]diazaoctane core. Deoxybrevianamide E is further hydroxylated at C-6 of the indole ring, likely catalyzed by the cytochrome P450 monooxygenase notG', to yield 6-hydroxy-deoxybrevianamide E. 6-hydroxy-deoxybrevianamide E is a specific substrate of the prenyltransferase notC' for normal prenylation at C-7 to produce 6-hydroxy-7-prenyl-deoxybrevianamide, also called notoamide S. As the proposed pivotal branching point in notoamide biosynthesis, notoamide S can be diverted to notoamide E through an oxidative pyran ring closure putatively catalyzed by either notH' cytochrome P450 monooxygenase or the notD' FAD-linked oxidoreductase. This step would be followed by an indole 2,3-epoxidation-initiated pinacol-like rearrangement catalyzed by the notB' FAD-dependent monooxygenase leading to the formation of notoamide C and notoamide D. On the other hand notoamide S is converted to notoamide T by notH' (or notD'), a bifunctional oxidase that also functions as the intramolecular Diels-Alderase responsible for generation of (-)-notoamide T. To generate antipodal (+)-notoaminide T, notH (or notD) in Aspergillus strain MF297-2 is expected to catalyze a Diels-Alder reaction leading to the opposite stereochemistry. The remaining oxidoreductase notD' (or notH') likely catalyzes the oxidative pyran ring formation to yield (-)-stephacidin A. The FAD-dependent monooxygenase notI' is highly similar to notB' and is predicted to catalyze a similar conversion from (-)-stephacidin A to (+)-notoamide B via the 2,3-epoxidation of (-)-stephacidin A followed by a pinacol-type rearrangement. Finally, it remains unclear which enzyme could be responsible for the final hydroxylation steps leading to notoamide A and sclerotiamide. In Aspergillus versicolor, this protein is Notoamide E oxidase notB'.